Here is a 307-residue protein sequence, read N- to C-terminus: D-alanine--D-alanine ligase (307 aa).

Residues 101-301 (KTVMRAAGVS…FGELVRWMVE (201 aa)) form the ATP-grasp domain. Residue 127–182 (PLTPPYVVKPIAEGSSMGVIIVREERSHPPQILASDEWVYGEEVLAETYIAGRELT) participates in ATP binding. Residues Asp-251, Glu-268, and Asn-270 each coordinate Mg(2+).

The protein belongs to the D-alanine--D-alanine ligase family. Mg(2+) is required as a cofactor. Mn(2+) serves as cofactor.

The protein resides in the cytoplasm. It catalyses the reaction 2 D-alanine + ATP = D-alanyl-D-alanine + ADP + phosphate + H(+). It functions in the pathway cell wall biogenesis; peptidoglycan biosynthesis. Its function is as follows. Cell wall formation. The sequence is that of D-alanine--D-alanine ligase from Methylorubrum populi (strain ATCC BAA-705 / NCIMB 13946 / BJ001) (Methylobacterium populi).